A 185-amino-acid polypeptide reads, in one-letter code: Intraflagellar transport protein 22 homolog (185 aa).

Residues 10-17 (GPCESGKT), 63-67 (DCGGD), and 123-126 (HKPG) contribute to the GTP site. Serine 137 carries the phosphoserine modification.

This sequence belongs to the small GTPase superfamily. Rab family. As to quaternary structure, component of the IFT complex B, at least composed of IFT20, IFT22, IFT25, IFT27, IFT46, IFT52, TRAF3IP1/IFT54, IFT57, IFT74, IFT80, IFT81, and IFT88. Interacts with IFT88. Interacts with CFAP61.

The protein resides in the cell projection. It is found in the cilium. In terms of biological role, small GTPase-like component of the intraflagellar transport (IFT) complex B. The chain is Intraflagellar transport protein 22 homolog (Ift22) from Rattus norvegicus (Rat).